A 92-amino-acid chain; its full sequence is Small ribosomal subunit protein uS19 (92 aa).

Belongs to the universal ribosomal protein uS19 family.

Functionally, protein S19 forms a complex with S13 that binds strongly to the 16S ribosomal RNA. This chain is Small ribosomal subunit protein uS19, found in Cereibacter sphaeroides (strain ATCC 17029 / ATH 2.4.9) (Rhodobacter sphaeroides).